The sequence spans 308 residues: tRNA dimethylallyltransferase (308 aa).

Position 14–21 (14–21) interacts with ATP; that stretch reads GPTASGKS. 16-21 serves as a coordination point for substrate; it reads TASGKS. The interaction with substrate tRNA stretch occupies residues 39 to 42; sequence DSMQ.

It belongs to the IPP transferase family. Monomer. It depends on Mg(2+) as a cofactor.

It catalyses the reaction adenosine(37) in tRNA + dimethylallyl diphosphate = N(6)-dimethylallyladenosine(37) in tRNA + diphosphate. Its function is as follows. Catalyzes the transfer of a dimethylallyl group onto the adenine at position 37 in tRNAs that read codons beginning with uridine, leading to the formation of N6-(dimethylallyl)adenosine (i(6)A). This Bradyrhizobium sp. (strain ORS 278) protein is tRNA dimethylallyltransferase.